The primary structure comprises 285 residues: Nucleotide-binding protein PFL_0912 (285 aa).

8–15 provides a ligand contact to ATP; that stretch reads GRSGSGKS. Residue 60-63 coordinates GTP; that stretch reads DARN.

Belongs to the RapZ-like family.

In terms of biological role, displays ATPase and GTPase activities. This is Nucleotide-binding protein PFL_0912 from Pseudomonas fluorescens (strain ATCC BAA-477 / NRRL B-23932 / Pf-5).